A 287-amino-acid polypeptide reads, in one-letter code: Thioredoxin-related transmembrane protein 2 (287 aa).

Positions 1-13 (MAVLAPLLAVLYA) are cleaved as a signal peptide. At 14-112 (APGLLRWVSQ…ILFFRLDLRM (99 aa)) the chain is on the extracellular side. Residues 113–133 (GLLYITLCIVFLMTCKPPLYL) form a helical membrane-spanning segment. Residues 134–287 (GPEHIKYFSD…NEWNDGKKDQ (154 aa)) are Cytoplasmic-facing. A Thioredoxin domain is found at 137-209 (HIKYFSDKTL…PEVSCRYSIS (73 aa)). Residues 284 to 287 (KKDQ) carry the Di-lysine motif motif.

Monomer. Homodimer; disulfide-linked. Occurs in both reduced and oxidized monomeric form. Oxidative conditions increase homodimerization.

The protein resides in the endoplasmic reticulum membrane. It localises to the mitochondrion membrane. In terms of biological role, endoplasmic reticulum and mitochondria-associated protein that probably functions as a regulator of cellular redox state and thereby regulates protein post-translational modification, protein folding and mitochondrial activity. This is Thioredoxin-related transmembrane protein 2 (tmx2) from Xenopus laevis (African clawed frog).